The following is a 1481-amino-acid chain: Neuropathy target esterase sws (1481 aa).

At 1–34 the chain is on the lumenal side; the sequence is MDVLELLRASANGCYNTIFSDAWSQYVSQQITSS. A helical membrane pass occupies residues 35–55; the sequence is LYLYIALGILTVLFVAWFIYF. At 56–1481 the chain is on the cytoplasmic side; sequence KRLARLRLRD…KENKNVNTKN (1426 aa). 175-302 lines the a nucleoside 3',5'-cyclic phosphate pocket; that stretch reads IFGHFEKPVF…IRVIQVIMIR (128 aa). The tract at residues 336 to 420 is disordered; it reads HLNSQSQSSQ…NNVQLPEVHG (85 aa). 2 stretches are compositionally biased toward low complexity: residues 339-379 and 401-412; these read SQSQ…LPLQ and SGPNPNPNSGNN. S448 is subject to Phosphoserine. A nucleoside 3',5'-cyclic phosphate is bound by residues 492-624 and 613-740; these read ELGL…VVRR and IVLD…LSHR. The PNPLA domain occupies 967–1133; that stretch reads LVLGGGGARG…VNNLPGHLWR (167 aa). The GXGXXG signature appears at 971 to 976; the sequence is GGGARG. The GXSXG signature appears at 998–1002; the sequence is GVSIG. S1000 functions as the Nucleophile in the catalytic mechanism. The active-site Proton acceptor is the D1120. Residues 1120–1122 carry the DGA/G motif; it reads DGG. Residue S1214 is modified to Phosphoserine. A disordered region spans residues 1366–1481; the sequence is LSLSEAEMDS…KENKNVNTKN (116 aa). Composition is skewed to basic and acidic residues over residues 1379-1390 and 1400-1410; these read IDFRSDSKKDKA and KDNEDKTDAVD. A compositionally biased stretch (low complexity) spans 1445 to 1457; that stretch reads TNTMTTQTTSPTT.

It belongs to the NTE family. In terms of assembly, interacts with Pka-C3; interaction inhibits the catalytic function of Pka-C3 and the esterase activity of sws.

Its subcellular location is the endoplasmic reticulum membrane. It carries out the reaction a 1-acyl-sn-glycero-3-phosphocholine + H2O = sn-glycerol 3-phosphocholine + a fatty acid + H(+). Functionally, phospholipase B that deacylates intracellular phosphatidylcholine (PtdCho), generating glycerophosphocholine (GroPtdCho). This deacylation occurs at both sn-2 and sn-1 positions of PtdCho. Its specific chemical modification by certain organophosphorus (OP) compounds leads to distal axonopathy. Plays a role in the signaling mechanism between neurons and glia that regulates glia wrapping during development of the adult brain. Essential for membrane lipid homeostasis and cell survival in both neurons and glia of the adult brain. The sequence is that of Neuropathy target esterase sws from Drosophila willistoni (Fruit fly).